We begin with the raw amino-acid sequence, 760 residues long: Alpha-amylase (760 aa).

The signal sequence occupies residues 1 to 34; sequence MSKRSKLLKRRMLSLSVICVLIGYGPVFNPVRSQ. The Ca(2+) site is built by asparagine 143, threonine 184, and aspartate 192. Catalysis depends on aspartate 222, which acts as the Nucleophile. Ca(2+) is bound at residue histidine 226. Residue glutamate 262 is the Proton donor of the active site.

The protein belongs to the glycosyl hydrolase 13 family. Monomer. Ca(2+) serves as cofactor.

It carries out the reaction Endohydrolysis of (1-&gt;4)-alpha-D-glucosidic linkages in polysaccharides containing three or more (1-&gt;4)-alpha-linked D-glucose units.. This chain is Alpha-amylase (amyA), found in Clostridium acetobutylicum (strain ATCC 824 / DSM 792 / JCM 1419 / IAM 19013 / LMG 5710 / NBRC 13948 / NRRL B-527 / VKM B-1787 / 2291 / W).